The chain runs to 239 residues: Serine protease SplC (239 aa).

A signal peptide spans 1-36 (MNKNIVIKSMAALAILTSVTGINAAVVDETQQIANA). Residues H75, D113, and S193 each act as charge relay system in the active site.

Belongs to the peptidase S1B family.

The protein localises to the secreted. The sequence is that of Serine protease SplC (splC) from Staphylococcus aureus (strain bovine RF122 / ET3-1).